The sequence spans 143 residues: NADH-quinone oxidoreductase subunit A (143 aa).

3 consecutive transmembrane segments (helical) span residues 8–28, 63–83, and 93–113; these read FGNV…GYLT, FYVV…LYPW, and FALI…AYAW.

This sequence belongs to the complex I subunit 3 family. As to quaternary structure, NDH-1 is composed of 14 different subunits. Subunits NuoA, H, J, K, L, M, N constitute the membrane sector of the complex.

The protein resides in the cell inner membrane. It catalyses the reaction a quinone + NADH + 5 H(+)(in) = a quinol + NAD(+) + 4 H(+)(out). Functionally, NDH-1 shuttles electrons from NADH, via FMN and iron-sulfur (Fe-S) centers, to quinones in the respiratory chain. The immediate electron acceptor for the enzyme in this species is believed to be a menaquinone. Couples the redox reaction to proton translocation (for every two electrons transferred, four hydrogen ions are translocated across the cytoplasmic membrane), and thus conserves the redox energy in a proton gradient. This chain is NADH-quinone oxidoreductase subunit A, found in Pelodictyon phaeoclathratiforme (strain DSM 5477 / BU-1).